An 89-amino-acid chain; its full sequence is Small ribosomal subunit protein uS15 (89 aa).

Belongs to the universal ribosomal protein uS15 family. As to quaternary structure, part of the 30S ribosomal subunit. Forms a bridge to the 50S subunit in the 70S ribosome, contacting the 23S rRNA.

In terms of biological role, one of the primary rRNA binding proteins, it binds directly to 16S rRNA where it helps nucleate assembly of the platform of the 30S subunit by binding and bridging several RNA helices of the 16S rRNA. Functionally, forms an intersubunit bridge (bridge B4) with the 23S rRNA of the 50S subunit in the ribosome. The protein is Small ribosomal subunit protein uS15 of Bacillus pumilus (strain SAFR-032).